The sequence spans 142 residues: Large ribosomal subunit protein uL13 (142 aa).

Belongs to the universal ribosomal protein uL13 family. In terms of assembly, part of the 50S ribosomal subunit.

Its function is as follows. This protein is one of the early assembly proteins of the 50S ribosomal subunit, although it is not seen to bind rRNA by itself. It is important during the early stages of 50S assembly. This Paraburkholderia phytofirmans (strain DSM 17436 / LMG 22146 / PsJN) (Burkholderia phytofirmans) protein is Large ribosomal subunit protein uL13.